A 433-amino-acid polypeptide reads, in one-letter code: Glutamyl-tRNA reductase (433 aa).

Residues 49-52, Ser114, 119-121, and Gln125 each bind substrate; these read TCNR and EPQ. Cys50 serves as the catalytic Nucleophile. 201 to 206 provides a ligand contact to NADP(+); that stretch reads GAGETI.

The protein belongs to the glutamyl-tRNA reductase family. In terms of assembly, homodimer.

The enzyme catalyses (S)-4-amino-5-oxopentanoate + tRNA(Glu) + NADP(+) = L-glutamyl-tRNA(Glu) + NADPH + H(+). It functions in the pathway porphyrin-containing compound metabolism; protoporphyrin-IX biosynthesis; 5-aminolevulinate from L-glutamyl-tRNA(Glu): step 1/2. Its function is as follows. Catalyzes the NADPH-dependent reduction of glutamyl-tRNA(Glu) to glutamate 1-semialdehyde (GSA). The protein is Glutamyl-tRNA reductase of Histophilus somni (strain 129Pt) (Haemophilus somnus).